The sequence spans 91 residues: Putative regulatory protein Cyan7425_4125 (91 aa).

This sequence belongs to the RemA family.

In Cyanothece sp. (strain PCC 7425 / ATCC 29141), this protein is Putative regulatory protein Cyan7425_4125.